Consider the following 71-residue polypeptide: MPVIKVRENEPFDVALRRFKRSCEKAGILSEVRSREFYEKPTTIRKRAKASAVKRHAKKLSRENARRIRLY.

Basic residues predominate over residues 48 to 59 (AKASAVKRHAKK). Positions 48 to 71 (AKASAVKRHAKKLSRENARRIRLY) are disordered. Over residues 60–71 (LSRENARRIRLY) the composition is skewed to basic and acidic residues.

It belongs to the bacterial ribosomal protein bS21 family.

The polypeptide is Small ribosomal subunit protein bS21 (Aeromonas hydrophila subsp. hydrophila (strain ATCC 7966 / DSM 30187 / BCRC 13018 / CCUG 14551 / JCM 1027 / KCTC 2358 / NCIMB 9240 / NCTC 8049)).